Here is a 451-residue protein sequence, read N- to C-terminus: 3-phosphoshikimate 1-carboxyvinyltransferase (451 aa).

K38, S39, and R43 together coordinate 3-phosphoshikimate. K38 serves as a coordination point for phosphoenolpyruvate. Residues G111 and R140 each contribute to the phosphoenolpyruvate site. S185, Q187, D335, and K362 together coordinate 3-phosphoshikimate. Q187 serves as a coordination point for phosphoenolpyruvate. D335 serves as the catalytic Proton acceptor. Phosphoenolpyruvate is bound by residues R366 and R408.

The protein belongs to the EPSP synthase family. As to quaternary structure, monomer.

The protein localises to the cytoplasm. The enzyme catalyses 3-phosphoshikimate + phosphoenolpyruvate = 5-O-(1-carboxyvinyl)-3-phosphoshikimate + phosphate. It participates in metabolic intermediate biosynthesis; chorismate biosynthesis; chorismate from D-erythrose 4-phosphate and phosphoenolpyruvate: step 6/7. In terms of biological role, catalyzes the transfer of the enolpyruvyl moiety of phosphoenolpyruvate (PEP) to the 5-hydroxyl of shikimate-3-phosphate (S3P) to produce enolpyruvyl shikimate-3-phosphate and inorganic phosphate. This Crocosphaera subtropica (strain ATCC 51142 / BH68) (Cyanothece sp. (strain ATCC 51142)) protein is 3-phosphoshikimate 1-carboxyvinyltransferase.